The chain runs to 458 residues: Transcription termination factor Rho (458 aa).

Residues 1–23 (MNTTNKESTAELNNTESNNNYNN) form a disordered region. Residues 10-23 (AELNNTESNNNYNN) show a composition bias toward low complexity. The region spanning 78 to 153 (LIVGEGVLEV…LKVNRVNFED (76 aa)) is the Rho RNA-BD domain. ATP-binding positions include 201 to 206 (GKGQRA), 213 to 218 (RTGKTV), and R244.

This sequence belongs to the Rho family. In terms of assembly, homohexamer. The homohexamer assembles into an open ring structure.

Functionally, facilitates transcription termination by a mechanism that involves Rho binding to the nascent RNA, activation of Rho's RNA-dependent ATPase activity, and release of the mRNA from the DNA template. The sequence is that of Transcription termination factor Rho from Rickettsia conorii (strain ATCC VR-613 / Malish 7).